Reading from the N-terminus, the 87-residue chain is Small ribosomal subunit protein uS15c (87 aa).

It belongs to the universal ribosomal protein uS15 family. In terms of assembly, part of the 30S ribosomal subunit.

It is found in the plastid. Its subcellular location is the chloroplast. This Oenothera biennis (German evening primrose) protein is Small ribosomal subunit protein uS15c (rps15).